The following is a 55-amino-acid chain: Omega-ctenitoxin-Pr2a (55 aa).

5 disulfides stabilise this stretch: Cys-2–Cys-16, Cys-9–Cys-22, Cys-15–Cys-37, Cys-24–Cys-35, and Cys-45–Cys-52.

As to expression, expressed by the venom gland.

It is found in the secreted. Functionally, antagonist of L-type calcium channels (Cav1/CACNA1). In vivo, causes paralysis in posterior limbs, and gradual decrease in movement and aggression during 24 hours after intracerebroventricular injection in mice at dose levels of 3 ug per mouse. This Phoneutria reidyi (Brazilian Amazonian armed spider) protein is Omega-ctenitoxin-Pr2a.